The following is a 491-amino-acid chain: MVFGEFFHRPGQDEELVNLNVGGFKQSVDQSTLLRFPHTRLGKLLTCHSEEAILELCDDYSVADKEYYFDRNPFLFRYVLNFYYTGKLHVMEELCVFSFCQEIEYWGINELFIDSCCSSRYQERKEESHDKDWDQKSNDVSTDSSFEESSLFEKELEKFDELRFGQLRKKIWIRMENPAYCLSAKLIAISSLSVVLASIVAMCVHSMSEFQNEDGEVDDPVLEGVEIACIAWFTGELAIRLVAAPSQKKFWKNPLNIIDFVSIIPFYATLAVDTKEEESEDIENMGKVVQILRLMRIFRILKLARHSVGLRSLGATLRHSYHEVGLLLLFLSVGISIFSVLIYSVEKDEHKSSLTSIPICWWWATISMTTVGYGDTHPVTLAGKIIASTCIICGILVVALPITIIFNKFSKYYQKQKDMEVDQCSEDPPEKCHELPYFNIRDVYAQQVHAFITSLSSIGIVVSDPDSTDASSVEDNEDAYNTASLENCTGK.

The Cytoplasmic portion of the chain corresponds to 1–182; it reads MVFGEFFHRP…IRMENPAYCL (182 aa). The helical transmembrane segment at 183 to 204 threads the bilayer; that stretch reads SAKLIAISSLSVVLASIVAMCV. The Extracellular segment spans residues 205–220; that stretch reads HSMSEFQNEDGEVDDP. The chain crosses the membrane as a helical span at residues 221 to 243; it reads VLEGVEIACIAWFTGELAIRLVA. The Cytoplasmic segment spans residues 244 to 254; the sequence is APSQKKFWKNP. The chain crosses the membrane as a helical span at residues 255–275; sequence LNIIDFVSIIPFYATLAVDTK. Residues 276-285 lie on the Extracellular side of the membrane; it reads EEESEDIENM. A helical; Voltage-sensor membrane pass occupies residues 286–306; the sequence is GKVVQILRLMRIFRILKLARH. Residues 307–321 are Cytoplasmic-facing; that stretch reads SVGLRSLGATLRHSY. Residues 322–343 form a helical membrane-spanning segment; sequence HEVGLLLLFLSVGISIFSVLIY. At 344–357 the chain is on the extracellular side; it reads SVEKDEHKSSLTSI. An intramembrane region (helical) is located at residues 358–369; the sequence is PICWWWATISMT. Positions 370–375 match the Selectivity filter motif; it reads TVGYGD. The stretch at 370–377 is an intramembrane region; it reads TVGYGDTH. Residues 378–384 lie on the Extracellular side of the membrane; the sequence is PVTLAGK. Residues 385-413 form a helical membrane-spanning segment; it reads IIASTCIICGILVVALPITIIFNKFSKYY. The Cytoplasmic portion of the chain corresponds to 414–491; sequence QKQKDMEVDQ…TASLENCTGK (78 aa).

The protein belongs to the potassium channel family. S (TC 1.A.1.2) subfamily. Kv9.3/KCNS3 sub-subfamily. In terms of assembly, heterotetramer with KCNB1. Does not form homomultimers.

It localises to the cell membrane. Its function is as follows. Potassium channel regulatory subunit that modulates the delayed rectifier potassium channel activity of KCNB1 by namely slowing down the deactivation and inactivation time constants. While it does not form functional channel on its own, it can form functional heterotetrameric channels with KCNB1. In Mus musculus (Mouse), this protein is Delayed-rectifier potassium channel regulatory subunit KCNS3.